A 575-amino-acid polypeptide reads, in one-letter code: Arginine--tRNA ligase (575 aa).

The 'HIGH' region motif lies at 130-140 (ANPTGPMHVGH).

The protein belongs to the class-I aminoacyl-tRNA synthetase family. In terms of assembly, monomer.

The protein localises to the cytoplasm. The catalysed reaction is tRNA(Arg) + L-arginine + ATP = L-arginyl-tRNA(Arg) + AMP + diphosphate. The protein is Arginine--tRNA ligase of Magnetococcus marinus (strain ATCC BAA-1437 / JCM 17883 / MC-1).